Here is a 420-residue protein sequence, read N- to C-terminus: Cytochrome P-450 monooxygenase DoxA (420 aa).

Cysteine 367 contacts heme.

It belongs to the cytochrome P450 family. Monomer. It depends on heme as a cofactor.

It is found in the cytoplasm. It carries out the reaction 13-deoxydaunorubicin + NADPH + O2 + H(+) = 13-dihydrodaunorubicin + NADP(+) + H2O. It catalyses the reaction 13-dihydrodaunorubicin + NADPH + O2 + H(+) = daunorubicin + NADP(+) + 2 H2O. The catalysed reaction is 13-deoxycarminomycin + NADPH + O2 + H(+) = 13-dihydrocarminomycin + NADP(+) + H2O. The enzyme catalyses 13-dihydrocarminomycin + NADPH + O2 + H(+) = carminomycin + NADP(+) + 2 H2O. It carries out the reaction daunorubicin + NADPH + O2 + H(+) = doxorubicin + NADP(+) + H2O. It functions in the pathway antibiotic biosynthesis; daunorubicin biosynthesis. Its pathway is antibiotic biosynthesis; carminomycin biosynthesis. The protein operates within antibiotic biosynthesis; doxorubicin biosynthesis. In terms of biological role, involved in the biosynthesis of the anthracyclines carminomycin, daunorubicin (daunomycin) and doxorubicin (adriamycin) which are aromatic polyketide antibiotics that exhibit high cytotoxicity and are widely applied in the chemotherapy of a variety of cancers. In vivo, DoxA catalyzes the C-13 hydroxylation of 13-deoxycarminomycin and 13-deoxydaunorubicin to yield 13-dihydrocarminomycin and 13-dihydrodaunorubicin, respectively, as well as the oxidation of these 13-dihydro-anthracyclines to their respective 13-keto forms, carminomycin and daunorubicin. In vivo, it also catalyzes the C-14 hydroxylation of daunorubicin to form doxorubicin. It can only use NADP. DoxA acts jointly with DnrV. This chain is Cytochrome P-450 monooxygenase DoxA (doxA), found in Streptomyces peucetius subsp. caesius.